The primary structure comprises 190 residues: Copper-binding lipoprotein NosL (190 aa).

Positions 1–23 (MNALHRIGAGTLLAVLLAFGLTG) are cleaved as a signal peptide. Residue cysteine 24 is the site of N-palmitoyl cysteine attachment. Cysteine 24 is lipidated: S-diacylglycerol cysteine. The segment at 170-190 (MQHGGMHDHAPNGAHNAHAGH) is disordered. The segment covering 180 to 190 (PNGAHNAHAGH) has biased composition (low complexity).

Belongs to the NosL family. As to quaternary structure, monomer.

It localises to the cell membrane. May act as a metallochaperone involved in nitrous oxide reductase assembly. Specifically binds Cu(+). The chain is Copper-binding lipoprotein NosL from Stutzerimonas stutzeri (Pseudomonas stutzeri).